Consider the following 535-residue polypeptide: Isoleucine N-monooxygenase 1 (535 aa).

The Cytoplasmic portion of the chain corresponds to 1 to 8 (MGLMPDFL). Residues 9-29 (SLCHEFPWTFLLVVIFSFMIF) form a helical; Signal-anchor for type II membrane protein membrane-spanning segment. At 30-535 (KVTKTHLVNK…AAELYRTNEI (506 aa)) the chain is on the lumenal side. N-linked (GlcNAc...) asparagine glycans are attached at residues Asn-38, Asn-232, and Asn-404. Residue Cys-470 participates in heme binding.

It belongs to the cytochrome P450 family. Heme serves as cofactor. Exclusively expressed in aerial parts. Highest expression in the apical leaves. Also detected in the second leaf from the top and in the stem. Not expressed in older leaves or roots.

Its subcellular location is the microsome membrane. It carries out the reaction L-isoleucine + 2 reduced [NADPH--hemoprotein reductase] + 2 O2 = (1E,2S)-2-methylbutanal oxime + 2 oxidized [NADPH--hemoprotein reductase] + CO2 + 3 H2O + 2 H(+). It catalyses the reaction L-isoleucine + reduced [NADPH--hemoprotein reductase] + O2 = N-hydroxy-L-isoleucine + oxidized [NADPH--hemoprotein reductase] + H2O + 2 H(+). The enzyme catalyses N-hydroxy-L-isoleucine + reduced [NADPH--hemoprotein reductase] + O2 = N,N-dihydroxy-L-isoleucine + oxidized [NADPH--hemoprotein reductase] + H2O + H(+). The catalysed reaction is L-valine + 2 reduced [NADPH--hemoprotein reductase] + 2 O2 = (E)-2-methylpropanal oxime + 2 oxidized [NADPH--hemoprotein reductase] + CO2 + 3 H2O + 2 H(+). It carries out the reaction L-valine + reduced [NADPH--hemoprotein reductase] + O2 = N-hydroxy-L-valine + oxidized [NADPH--hemoprotein reductase] + H2O + 2 H(+). It catalyses the reaction N-hydroxy-L-valine + reduced [NADPH--hemoprotein reductase] + O2 = N,N-dihydroxy-L-valine + oxidized [NADPH--hemoprotein reductase] + H2O + H(+). It participates in secondary metabolite biosynthesis. Involved in the biosynthesis of the cyanogenic glucosides linamarin and lotaustralin and of the nitirle glucosides rhodiocyanoside A and D. Can use L-isoleucine &gt; L-valine as substrate, but not L-leucine, L-phenylalanine or L-tyrosine. Catalyzes multi-step reactions starting with two successive N-hydroxylations using L-isoleucine and, to a lower extent, L-valine as substrates leading to the formation of N,N-dihydroxy-L-valine and N,N-dihydroxy-L-isoleucine, respectively; following spontaneous reactions lead to the production of (E)-2-methylpropanal oxime and (1E,2S)-2-methylbutanal oxime, respectively. The protein is Isoleucine N-monooxygenase 1 of Lotus japonicus (Lotus corniculatus var. japonicus).